The chain runs to 102 residues: Small ribosomal subunit protein uS10 (102 aa).

The protein belongs to the universal ribosomal protein uS10 family. Part of the 30S ribosomal subunit.

Involved in the binding of tRNA to the ribosomes. In Sulfurisphaera tokodaii (strain DSM 16993 / JCM 10545 / NBRC 100140 / 7) (Sulfolobus tokodaii), this protein is Small ribosomal subunit protein uS10.